A 302-amino-acid chain; its full sequence is Sulfate adenylyltransferase subunit 2 (302 aa).

It belongs to the PAPS reductase family. CysD subfamily. As to quaternary structure, heterodimer composed of CysD, the smaller subunit, and CysN.

It catalyses the reaction sulfate + ATP + H(+) = adenosine 5'-phosphosulfate + diphosphate. Its pathway is sulfur metabolism; hydrogen sulfide biosynthesis; sulfite from sulfate: step 1/3. Its function is as follows. With CysN forms the ATP sulfurylase (ATPS) that catalyzes the adenylation of sulfate producing adenosine 5'-phosphosulfate (APS) and diphosphate, the first enzymatic step in sulfur assimilation pathway. APS synthesis involves the formation of a high-energy phosphoric-sulfuric acid anhydride bond driven by GTP hydrolysis by CysN coupled to ATP hydrolysis by CysD. This Bacteroides thetaiotaomicron (strain ATCC 29148 / DSM 2079 / JCM 5827 / CCUG 10774 / NCTC 10582 / VPI-5482 / E50) protein is Sulfate adenylyltransferase subunit 2.